The sequence spans 591 residues: Aspartate--tRNA(Asp/Asn) ligase (591 aa).

Position 174 (E174) interacts with L-aspartate. The interval 198 to 201 (QLFK) is aspartate. An L-aspartate-binding site is contributed by R220. Residues 220–222 (RDE) and Q229 each bind ATP. An L-aspartate-binding site is contributed by H450. E483 lines the ATP pocket. R490 is a binding site for L-aspartate. ATP is bound at residue 535 to 538 (GLDR).

This sequence belongs to the class-II aminoacyl-tRNA synthetase family. Type 1 subfamily. In terms of assembly, homodimer.

The protein localises to the cytoplasm. The catalysed reaction is tRNA(Asx) + L-aspartate + ATP = L-aspartyl-tRNA(Asx) + AMP + diphosphate. Functionally, aspartyl-tRNA synthetase with relaxed tRNA specificity since it is able to aspartylate not only its cognate tRNA(Asp) but also tRNA(Asn). Reaction proceeds in two steps: L-aspartate is first activated by ATP to form Asp-AMP and then transferred to the acceptor end of tRNA(Asp/Asn). The chain is Aspartate--tRNA(Asp/Asn) ligase from Pseudomonas syringae pv. tomato (strain ATCC BAA-871 / DC3000).